The chain runs to 114 residues: T cell receptor beta variable 6-2 (114 aa).

The N-terminal stretch at Met1–Ala21 is a signal peptide. Residues Gly22–Tyr114 enclose the Ig-like domain. A disulfide bond links Cys42 and Cys110. Asn84 carries an N-linked (GlcNAc...) asparagine glycan.

Alpha-beta TR is a heterodimer composed of an alpha and beta chain; disulfide-linked. The alpha-beta TR is associated with the transmembrane signaling CD3 coreceptor proteins to form the TR-CD3 (TcR or TCR). The assembly of alpha-beta TR heterodimers with CD3 occurs in the endoplasmic reticulum where a single alpha-beta TR heterodimer associates with one CD3D-CD3E heterodimer, one CD3G-CD3E heterodimer and one CD247 homodimer forming a stable octameric structure. CD3D-CD3E and CD3G-CD3E heterodimers preferentially associate with TR alpha and TR beta chains, respectively. The association of the CD247 homodimer is the last step of TcR assembly in the endoplasmic reticulum and is required for transport to the cell surface.

It is found in the cell membrane. V region of the variable domain of T cell receptor (TR) beta chain that participates in the antigen recognition. Alpha-beta T cell receptors are antigen specific receptors which are essential to the immune response and are present on the cell surface of T lymphocytes. Recognize peptide-major histocompatibility (MH) (pMH) complexes that are displayed by antigen presenting cells (APC), a prerequisite for efficient T cell adaptive immunity against pathogens. Binding of alpha-beta TR to pMH complex initiates TR-CD3 clustering on the cell surface and intracellular activation of LCK that phosphorylates the ITAM motifs of CD3G, CD3D, CD3E and CD247 enabling the recruitment of ZAP70. In turn ZAP70 phosphorylates LAT, which recruits numerous signaling molecules to form the LAT signalosome. The LAT signalosome propagates signal branching to three major signaling pathways, the calcium, the mitogen-activated protein kinase (MAPK) kinase and the nuclear factor NF-kappa-B (NF-kB) pathways, leading to the mobilization of transcription factors that are critical for gene expression and essential for T cell growth and differentiation. The T cell repertoire is generated in the thymus, by V-(D)-J rearrangement. This repertoire is then shaped by intrathymic selection events to generate a peripheral T cell pool of self-MH restricted, non-autoaggressive T cells. Post-thymic interaction of alpha-beta TR with the pMH complexes shapes TR structural and functional avidity. The polypeptide is T cell receptor beta variable 6-2 (Homo sapiens (Human)).